Consider the following 320-residue polypeptide: GTP 3',8-cyclase (320 aa).

A Radical SAM core domain is found at 5 to 225 (QFGRKINYLR…IQLIKKDEKA (221 aa)). Arginine 14 contributes to the GTP binding site. [4Fe-4S] cluster is bound by residues cysteine 21 and cysteine 25. Tyrosine 27 is a binding site for S-adenosyl-L-methionine. Cysteine 28 is a [4Fe-4S] cluster binding site. Position 64 (arginine 64) interacts with GTP. Residue glycine 68 coordinates S-adenosyl-L-methionine. Threonine 95 contacts GTP. Serine 119 is a binding site for S-adenosyl-L-methionine. Lysine 155 serves as a coordination point for GTP. An S-adenosyl-L-methionine-binding site is contributed by methionine 189. [4Fe-4S] cluster is bound by residues cysteine 248 and cysteine 251. 253–255 (RIR) provides a ligand contact to GTP. Cysteine 265 contacts [4Fe-4S] cluster.

This sequence belongs to the radical SAM superfamily. MoaA family. In terms of assembly, monomer and homodimer. It depends on [4Fe-4S] cluster as a cofactor.

The enzyme catalyses GTP + AH2 + S-adenosyl-L-methionine = (8S)-3',8-cyclo-7,8-dihydroguanosine 5'-triphosphate + 5'-deoxyadenosine + L-methionine + A + H(+). Its pathway is cofactor biosynthesis; molybdopterin biosynthesis. Catalyzes the cyclization of GTP to (8S)-3',8-cyclo-7,8-dihydroguanosine 5'-triphosphate. This chain is GTP 3',8-cyclase, found in Campylobacter jejuni subsp. jejuni serotype O:6 (strain 81116 / NCTC 11828).